The primary structure comprises 260 residues: Pyridoxine 5'-phosphate synthase (260 aa).

Positions 7 and 18 each coordinate 3-amino-2-oxopropyl phosphate. Catalysis depends on His43, which acts as the Proton acceptor. Residues Arg45 and His50 each contribute to the 1-deoxy-D-xylulose 5-phosphate site. The Proton acceptor role is filled by Glu83. 1-deoxy-D-xylulose 5-phosphate is bound at residue Thr113. His208 (proton donor) is an active-site residue. 3-amino-2-oxopropyl phosphate is bound by residues Asp209 and 230 to 231 (GH).

The protein belongs to the PNP synthase family. Homooctamer; tetramer of dimers.

It is found in the cytoplasm. It carries out the reaction 3-amino-2-oxopropyl phosphate + 1-deoxy-D-xylulose 5-phosphate = pyridoxine 5'-phosphate + phosphate + 2 H2O + H(+). The protein operates within cofactor biosynthesis; pyridoxine 5'-phosphate biosynthesis; pyridoxine 5'-phosphate from D-erythrose 4-phosphate: step 5/5. Its function is as follows. Catalyzes the complicated ring closure reaction between the two acyclic compounds 1-deoxy-D-xylulose-5-phosphate (DXP) and 3-amino-2-oxopropyl phosphate (1-amino-acetone-3-phosphate or AAP) to form pyridoxine 5'-phosphate (PNP) and inorganic phosphate. The polypeptide is Pyridoxine 5'-phosphate synthase (Leptospira biflexa serovar Patoc (strain Patoc 1 / Ames)).